The primary structure comprises 165 residues: MAPSLWKGLVGIGLFALAHAAFSAAQHYFPSSGIKWKRKCEFLQSSSFQDKIFRSMYYVYDRSYMRLTEKEDESLPIDIVLQTLLAFAVTCYGIVHIAGEFKDMDATSELKNKTFDTLRNHPSFYVYNHRGRVLFRPSDTTNSSNQDALSSNTSLKLRKLESLRR.

The Cytoplasmic segment spans residues 1 to 3 (MAP). The helical transmembrane segment at 4–22 (SLWKGLVGIGLFALAHAAF) threads the bilayer. At 23 to 77 (SAAQHYFPSSGIKWKRKCEFLQSSSFQDKIFRSMYYVYDRSYMRLTEKEDESLPI) the chain is on the lumenal side. A helical transmembrane segment spans residues 78–97 (DIVLQTLLAFAVTCYGIVHI). Residues 98-165 (AGEFKDMDAT…KLRKLESLRR (68 aa)) lie on the Cytoplasmic side of the membrane. Residue serine 154 is modified to Phosphoserine.

This sequence belongs to the membrane magnesium transporter (TC 1.A.67) family. In terms of assembly, component of the ER membrane protein complex (EMC).

It is found in the endoplasmic reticulum membrane. It localises to the golgi apparatus membrane. Its subcellular location is the early endosome membrane. Part of the endoplasmic reticulum membrane protein complex (EMC) that enables the energy-independent insertion into endoplasmic reticulum membranes of newly synthesized membrane proteins. Preferentially accommodates proteins with transmembrane domains that are weakly hydrophobic or contain destabilizing features such as charged and aromatic residues. Involved in the cotranslational insertion of multi-pass membrane proteins in which stop-transfer membrane-anchor sequences become ER membrane spanning helices. It is also required for the post-translational insertion of tail-anchored/TA proteins in endoplasmic reticulum membranes. By mediating the proper cotranslational insertion of N-terminal transmembrane domains in an N-exo topology, with translocated N-terminus in the lumen of the ER, controls the topology of multi-pass membrane proteins like the G protein-coupled receptors. By regulating the insertion of various proteins in membranes, it is indirectly involved in many cellular processes. May be involved in Mg(2+) transport. This Bos taurus (Bovine) protein is ER membrane protein complex subunit 5.